The chain runs to 285 residues: Glutamate racemase (285 aa).

Substrate contacts are provided by residues 28 to 29 and 60 to 61; these read DS and YG. Cysteine 92 serves as the catalytic Proton donor/acceptor. A substrate-binding site is contributed by 93–94; sequence NT. The active-site Proton donor/acceptor is cysteine 204. 205–206 contacts substrate; sequence TH.

Belongs to the aspartate/glutamate racemases family.

The enzyme catalyses L-glutamate = D-glutamate. The protein operates within cell wall biogenesis; peptidoglycan biosynthesis. Provides the (R)-glutamate required for cell wall biosynthesis. The sequence is that of Glutamate racemase from Escherichia coli O6:H1 (strain CFT073 / ATCC 700928 / UPEC).